The following is a 282-amino-acid chain: NADPH-dependent 7-cyano-7-deazaguanine reductase (282 aa).

Residue 88–90 (IES) coordinates substrate. An NADPH-binding site is contributed by 90 to 91 (SK). Cys-190 acts as the Thioimide intermediate in catalysis. The active-site Proton donor is Asp-197. Position 229-230 (229-230 (HE)) interacts with substrate. 258 to 259 (RG) lines the NADPH pocket.

The protein belongs to the GTP cyclohydrolase I family. QueF type 2 subfamily. In terms of assembly, homodimer.

The protein localises to the cytoplasm. It catalyses the reaction 7-aminomethyl-7-carbaguanine + 2 NADP(+) = 7-cyano-7-deazaguanine + 2 NADPH + 3 H(+). The protein operates within tRNA modification; tRNA-queuosine biosynthesis. Its function is as follows. Catalyzes the NADPH-dependent reduction of 7-cyano-7-deazaguanine (preQ0) to 7-aminomethyl-7-deazaguanine (preQ1). This chain is NADPH-dependent 7-cyano-7-deazaguanine reductase, found in Escherichia coli (strain K12 / MC4100 / BW2952).